Here is a 113-residue protein sequence, read N- to C-terminus: UPF0122 protein LAF_1235 (113 aa).

This sequence belongs to the UPF0122 family.

In terms of biological role, might take part in the signal recognition particle (SRP) pathway. This is inferred from the conservation of its genetic proximity to ftsY/ffh. May be a regulatory protein. This chain is UPF0122 protein LAF_1235, found in Limosilactobacillus fermentum (strain NBRC 3956 / LMG 18251) (Lactobacillus fermentum).